Reading from the N-terminus, the 1113-residue chain is Poly(A) RNA polymerase gld-2 (1113 aa).

Disordered regions lie at residues 1–113, 134–175, 205–266, and 445–513; these read MVMA…PKYH, RPIF…PTQP, LYRS…GQDP, and LDDE…DEST. Low complexity predominate over residues 22–52; it reads SPSVDSVSRVQQQSGGFAFYNQQSNHQYQQS. Over residues 60–106 the composition is skewed to polar residues; that stretch reads SRDGNTGYYNNHSGNKRQTYNNQRGGRSYNHRGNSNYQQNGEYSGNQ. The segment covering 149–172 has biased composition (low complexity); the sequence is RRSSPPSPSALSSSTANSTSNRAP. Residues 223 to 233 are compositionally biased toward pro residues; it reads YKQPPPQPPST. A compositionally biased stretch (basic and acidic residues) spans 451-485; sequence GADHDKTIDENRRRIHKSQEPRIGTEEKALNELPR. Residues 492–507 are compositionally biased toward low complexity; that stretch reads SSCSSISSVSESSSPS. 2 residues coordinate Mg(2+): Asp-606 and Asp-608. The 37-residue stretch at 780–816 folds into the PAP-associated domain; it reads TLGELLIGFLDYYANEFNYDRDAISIRQGRRVERAAL. 2 disordered regions span residues 817–854 and 966–1113; these read AVRP…GIPM and GPGH…NVSQ. Positions 972–994 are enriched in polar residues; that stretch reads YQQQSNQNLSRPQRPGSNQGYQM. Low complexity-rich tracts occupy residues 995–1035 and 1044–1061; these read NNNR…SRSN and QQNS…KENV. Over residues 1069–1084 the composition is skewed to basic and acidic residues; the sequence is VDKKQQNSNRKDDGNR.

This sequence belongs to the DNA polymerase type-B-like family. GLD2 subfamily. In terms of assembly, interacts with gld-3. The cofactor is Mg(2+). It depends on Mn(2+) as a cofactor. As to expression, germline-specific.

The protein resides in the cytoplasm. The catalysed reaction is RNA(n) + ATP = RNA(n)-3'-adenine ribonucleotide + diphosphate. Cytoplasmic poly(A) RNA polymerase that adds successive AMP monomers to the 3'-end of specific RNAs, forming a poly(A) tail. Acts as a regulator of mitosis/meiosis required for progression through meiotic prophase during oogenesis and spermatogenesis and for promotion of the entry into meiosis from the mitotic cell cycle. May act by regulating and activating gld-1 mRNA activity in germline. Required for polyadenylation of neg-1 mRNA during embryogenesis. This Caenorhabditis elegans protein is Poly(A) RNA polymerase gld-2 (gld-2).